The chain runs to 381 residues: 2-methylcitrate synthase 1 (381 aa).

His192 serves as a coordination point for substrate. Residue His227 is part of the active site. 260-264 provides a ligand contact to CoA; it reads RIMGF. His266 is an active-site residue. Residue Arg275 participates in substrate binding. The active site involves Asp317. Substrate is bound by residues Arg342 and Arg361.

This sequence belongs to the citrate synthase family. In terms of assembly, homodimer.

It catalyses the reaction propanoyl-CoA + oxaloacetate + H2O = (2S,3S)-2-methylcitrate + CoA + H(+). It carries out the reaction oxaloacetate + acetyl-CoA + H2O = citrate + CoA + H(+). The protein operates within carbohydrate metabolism; tricarboxylic acid cycle. Catalyzes the Claisen condensation of propionyl-CoA and oxaloacetate (OAA) to yield 2-methylcitrate (2-MC) and CoA. Also catalyzes the condensation of oxaloacetate with propionyl-CoA but with a lower specificity. The chain is 2-methylcitrate synthase 1 (prpC1) from Corynebacterium glutamicum (strain ATCC 13032 / DSM 20300 / JCM 1318 / BCRC 11384 / CCUG 27702 / LMG 3730 / NBRC 12168 / NCIMB 10025 / NRRL B-2784 / 534).